A 793-amino-acid chain; its full sequence is MFSLRKTKLQPVSLHQCRLSSLFRGVLIHAIEVTGTQSQASLQHGLAGKAVLSNAKYLSVLTRFRTSTRFDVWSIHRREAISSISGSILLQARDPAKLNEEIQIAVDEHRCDEAWRLFEQHMQMEGFPRKSVVNNVVVCFAESLDSNWLQKGYSLVEQAYEEGKQNLLEKEPLLYLSLALAKSGMAVPASTILRKLVETEEYPHVSAWSAVLAHMSLAGSGSYLSAELVLEIGYLFHNNRVDPRKKSNAPLLAMKPNTQVLNVALAGCLLFGTTRKAEQLLDMIPKIGVKADANLLVIMAHIYERNGRREELRKLQRHIDEACNLNESQFWQFYNCLLMCHLKFGDLESASKMVLEMLRRGKVARNSLGAAILEFDTADDGRLYTKRVSGKGSEVKEHDNPETRVVSIHSMIPYDEFSRDRKFLKLEAEAKDVLGALLAKLHVQVELITSERGVLQPTEEIYVKLAKAFLESGKMKELAKFLLKAEHEDSPVSSDNSMLINVINACISLGMLDQAHDLLDEMRMAGVRTGSSVYSSLLKAYCNTNQTREVTSLLRDAQKAGIQLDSSCYEALIQSQVIQNDTHGALNVFKEMKEAKILRGGNQKFEKLLKGCEGNAEAGLMSKLLREIREVQSLDAGVHDWNNVIHFFSKKGLMQDAEKALKRMRSLGHSPNAQTFHSMVTGYAAIGSKYTEVTELWGEMKSIAAATSSMKFDQELLDAVLYTFVRGGFFSRANEVVEMMEKKNMFVDKYKYRMLFLKYHKTAYKGKAPKVQSESQLKKREAGLVFKKWLGLS.

A mitochondrion-targeting transit peptide spans 1-87; sequence MFSLRKTKLQ…REAISSISGS (87 aa). PPR repeat units lie at residues 257-291, 292-322, 330-364, 458-492, 495-529, 530-564, 565-599, 601-631, 637-671, 672-707, and 713-747; these read NTQV…GVKA, DANL…IDEA, FWQF…GKVA, TEEI…DSPV, DNSM…GVRT, GSSV…GIQL, DSSC…KILR, GNQK…IREV, GVHD…GHSP, NAQT…AAAT, and DQEL…NMFV.

This sequence belongs to the PPR family. P subfamily.

It localises to the mitochondrion. The protein is Pentatricopeptide repeat-containing protein At1g03100, mitochondrial of Arabidopsis thaliana (Mouse-ear cress).